The chain runs to 584 residues: Interferon regulatory factor 2-binding protein 1 (584 aa).

Residues 60–127 (VLPEGRSPGP…SGRLPLPSPA (68 aa)) form a disordered region. 2 positions are modified to phosphoserine: Ser-66 and Ser-125. Arg-177 bears the Omega-N-methylarginine mark. Ser-186 carries the post-translational modification Phosphoserine. Residues 197–217 (EKEKQQRNADCLAELNEAMRG) are a coiled coil. A Glycyl lysine isopeptide (Lys-Gly) (interchain with G-Cter in SUMO2) cross-link involves residue Lys-227. The disordered stretch occupies residues 346–420 (PAEALPQQYP…PYSAETPGVP (75 aa)). The span at 354–369 (YPEPAPAALCGPPPRA) shows a compositional bias: pro residues. Ser-371, Ser-384, Ser-421, and Ser-436 each carry phosphoserine. The tract at residues 433-495 (LGHSPKDPGG…VSGGGSGTGA (63 aa)) is disordered. Residue Lys-438 forms a Glycyl lysine isopeptide (Lys-Gly) (interchain with G-Cter in SUMO2) linkage. The span at 449–463 (AGGASPAASSTAQPP) shows a compositional bias: low complexity. Phosphoserine is present on residues Ser-453 and Ser-457. Residues 503-550 (CTLCRERLEDTHFVQCPSVPGHKFCFPCSREFIKAQGPAGEVYCPSGD) form an RING-type; degenerate zinc finger. The interval 503–550 (CTLCRERLEDTHFVQCPSVPGHKFCFPCSREFIKAQGPAGEVYCPSGD) is cys-rich.

This sequence belongs to the IRF2BP family. Interacts with IRF2. Part of a corepressor complex containing IRF2 and IRF2BP2. Interacts with JDP2.

It localises to the nucleus. It catalyses the reaction S-ubiquitinyl-[E2 ubiquitin-conjugating enzyme]-L-cysteine + [acceptor protein]-L-lysine = [E2 ubiquitin-conjugating enzyme]-L-cysteine + N(6)-ubiquitinyl-[acceptor protein]-L-lysine.. Functionally, acts as a transcriptional corepressor in a IRF2-dependent manner; this repression is not mediated by histone deacetylase activities. May act as an E3 ligase towards JDP2, enhancing its polyubiquitination. Represses ATF2-dependent transcriptional activation. The polypeptide is Interferon regulatory factor 2-binding protein 1 (IRF2BP1) (Homo sapiens (Human)).